We begin with the raw amino-acid sequence, 166 residues long: Interferon gamma (166 aa).

The signal sequence occupies residues 1–23 (MKYTSSFLALLLSVLLGFSGSYG). Gln24 carries the post-translational modification Pyrrolidone carboxylic acid. N-linked (GlcNAc...) asparagine glycans are attached at residues Asn39 and Asn106.

This sequence belongs to the type II (or gamma) interferon family. As to quaternary structure, homodimer. Interacts with IFNGR1 (via extracellular domain); this interaction promotes IFNGR1 dimerization. As to expression, released primarily from activated T lymphocytes.

It is found in the secreted. Type II interferon produced by immune cells such as T-cells and NK cells that plays crucial roles in antimicrobial, antiviral, and antitumor responses by activating effector immune cells and enhancing antigen presentation. Primarily signals through the JAK-STAT pathway after interaction with its receptor IFNGR1 to affect gene regulation. Upon IFNG binding, IFNGR1 intracellular domain opens out to allow association of downstream signaling components JAK2, JAK1 and STAT1, leading to STAT1 activation, nuclear translocation and transcription of IFNG-regulated genes. Many of the induced genes are transcription factors such as IRF1 that are able to further drive regulation of a next wave of transcription. Plays a role in class I antigen presentation pathway by inducing a replacement of catalytic proteasome subunits with immunoproteasome subunits. In turn, increases the quantity, quality, and repertoire of peptides for class I MHC loading. Increases the efficiency of peptide generation also by inducing the expression of activator PA28 that associates with the proteasome and alters its proteolytic cleavage preference. Up-regulates as well MHC II complexes on the cell surface by promoting expression of several key molecules such as cathepsins B/CTSB, H/CTSH, and L/CTSL. Participates in the regulation of hematopoietic stem cells during development and under homeostatic conditions by affecting their development, quiescence, and differentiation. The polypeptide is Interferon gamma (IFNG) (Capra hircus (Goat)).